A 239-amino-acid chain; its full sequence is Ubiquinone biosynthesis O-methyltransferase (239 aa).

Positions 44, 63, 84, and 128 each coordinate S-adenosyl-L-methionine.

Belongs to the methyltransferase superfamily. UbiG/COQ3 family.

It carries out the reaction a 3-demethylubiquinol + S-adenosyl-L-methionine = a ubiquinol + S-adenosyl-L-homocysteine + H(+). The catalysed reaction is a 3-(all-trans-polyprenyl)benzene-1,2-diol + S-adenosyl-L-methionine = a 2-methoxy-6-(all-trans-polyprenyl)phenol + S-adenosyl-L-homocysteine + H(+). The protein operates within cofactor biosynthesis; ubiquinone biosynthesis. Functionally, O-methyltransferase that catalyzes the 2 O-methylation steps in the ubiquinone biosynthetic pathway. This Xanthomonas oryzae pv. oryzae (strain MAFF 311018) protein is Ubiquinone biosynthesis O-methyltransferase.